An 80-amino-acid polypeptide reads, in one-letter code: UPF0512 protein J (80 aa).

This sequence belongs to the UPF0512 family.

This chain is UPF0512 protein J, found in Dictyostelium discoideum (Social amoeba).